A 1415-amino-acid polypeptide reads, in one-letter code: Major viral transcription factor ICP4 homolog (1415 aa).

4 disordered regions span residues 48 to 272 (MDDD…SSSG), 454 to 480 (DNSS…TSTQ), 691 to 935 (LLND…PSCY), and 1371 to 1415 (QHEE…TFTD). Residues 96–105 (PRLTTPSSGR) show a composition bias toward polar residues. The segment covering 125 to 187 (PETSPSNEHI…LSSPSSSRSP (63 aa)) has biased composition (low complexity). Residues 245–255 (GGGRPRGRPPK) are compositionally biased toward basic residues. 2 stretches are compositionally biased toward polar residues: residues 263–272 (NDIQVTSSSG) and 465–480 (SKPS…TSTQ). Residues 724 to 738 (STSSSQSASDKSPIK) show a composition bias toward low complexity. 2 stretches are compositionally biased toward polar residues: residues 814 to 837 (KAQT…QSSS) and 895 to 910 (VGQT…HDIL). Low complexity predominate over residues 911-933 (SSSLPNRSCSSSPSPSKRPYHPS).

Belongs to the herpesviridae ICP4 family. A long stretch of serine residues may be a major site of phosphorylation.

The protein localises to the host nucleus. Its function is as follows. This IE protein is a multifunctional protein capable of migrating to the nucleus, binding to DNA, trans-activating other viral genes, and autoregulating its own synthesis. It is required for the switch from immediate-early to early mode of gene expression. The protein is Major viral transcription factor ICP4 homolog (ICP4) of Gallus gallus (Chicken).